The sequence spans 345 residues: Phosphoribosylformylglycinamidine cyclo-ligase (345 aa).

It belongs to the AIR synthase family.

It is found in the cytoplasm. It carries out the reaction 2-formamido-N(1)-(5-O-phospho-beta-D-ribosyl)acetamidine + ATP = 5-amino-1-(5-phospho-beta-D-ribosyl)imidazole + ADP + phosphate + H(+). Its pathway is purine metabolism; IMP biosynthesis via de novo pathway; 5-amino-1-(5-phospho-D-ribosyl)imidazole from N(2)-formyl-N(1)-(5-phospho-D-ribosyl)glycinamide: step 2/2. The chain is Phosphoribosylformylglycinamidine cyclo-ligase from Pasteurella multocida (strain Pm70).